Consider the following 195-residue polypeptide: Imidazole glycerol phosphate synthase subunit HisH 2 (195 aa).

The Glutamine amidotransferase type-1 domain occupies 2-195 (KIIIIDTACA…LISNFIKDIG (194 aa)). Cys-77 (nucleophile) is an active-site residue. Active-site residues include His-175 and Glu-177.

Heterodimer of HisH and HisF.

The protein resides in the cytoplasm. It carries out the reaction 5-[(5-phospho-1-deoxy-D-ribulos-1-ylimino)methylamino]-1-(5-phospho-beta-D-ribosyl)imidazole-4-carboxamide + L-glutamine = D-erythro-1-(imidazol-4-yl)glycerol 3-phosphate + 5-amino-1-(5-phospho-beta-D-ribosyl)imidazole-4-carboxamide + L-glutamate + H(+). It catalyses the reaction L-glutamine + H2O = L-glutamate + NH4(+). The protein operates within amino-acid biosynthesis; L-histidine biosynthesis; L-histidine from 5-phospho-alpha-D-ribose 1-diphosphate: step 5/9. Its function is as follows. IGPS catalyzes the conversion of PRFAR and glutamine to IGP, AICAR and glutamate. The HisH subunit provides the glutamine amidotransferase activity that produces the ammonia necessary to HisF for the synthesis of IGP and AICAR. The chain is Imidazole glycerol phosphate synthase subunit HisH 2 (hisH2) from Campylobacter jejuni subsp. jejuni serotype O:2 (strain ATCC 700819 / NCTC 11168).